A 403-amino-acid polypeptide reads, in one-letter code: Zinc finger HIT domain-containing protein 2 (403 aa).

Position 1 is an N-acetylmethionine (Met-1). Zn(2+) is bound by residues Cys-7, Cys-10, Cys-22, Cys-25, Cys-30, Cys-34, His-38, and Cys-41. The HIT-type zinc finger occupies 7–41 (CGFCPAGEVQPARYTCPRCNAPYCSLRCYRTHGTC). The disordered stretch occupies residues 72–98 (RQQRETEDEPGEAGLSSGPAPGGLSGL). A Phosphothreonine modification is found at Thr-161.

Interacts (via HIT-type zinc finger) with RUVBL2 in the presence of ATP or ADP; shows a stronger interaction in the presence of ADP. Low expression in most tissues; highly expressed in testis.

May act as a bridging factor mediating the interaction between the R2TP/Prefoldin-like (R2TP/PFDL) complex and U5 small nuclear ribonucleoprotein (U5 snRNP). Required for the interaction of R2TP complex subunit RPAP3 and prefoldin-like subunit URI1 with U5 snRNP proteins EFTUD2 and PRPF8. May play a role in regulating the composition of the U5 snRNP complex. The sequence is that of Zinc finger HIT domain-containing protein 2 (ZNHIT2) from Homo sapiens (Human).